The chain runs to 397 residues: MAQPPRPAEEYDDDVQEDEDELKEGELDDDESHEAASEGGEAAAGDEEAEDDEQDEEDGDEDSQPWAGLNRLPERDDMLDILNELRAEGRKQLTVLLLGKSSVGKSSLINSLLGEAVVRVQAFKLQADTDITTTVVRQVAVGNSEVDGFRLKLIDTCGLEDPEAGDTVNLGALSKIAEDVRGVGIDVVLYCDRLDLYRVDPLDKAIIDAISSTFGRGIWRRTVVALTHANLVQTPPGTDYDSFVNGRVRLIRGAVRGPLFFRPSLPVALVENSETCPVSSESGFRVLPDGEPWLVALVSQLVDMAAARRRPYKYHPRLSSKPSHRFRWLLPVAIAAEVLFYRRFLHPRLDDNQRRVEREEERVWALRGQQRRALGLHRPHRPDKDAAWRLEQMYDDD.

Residues 1 to 72 form a disordered region; the sequence is MAQPPRPAEE…SQPWAGLNRL (72 aa). 2 stretches are compositionally biased toward acidic residues: residues 10–32 and 44–63; these read EYDD…DDES and AGDE…DEDS. The AIG1-type G domain maps to 90–321; that stretch reads RKQLTVLLLG…YKYHPRLSSK (232 aa). The G1 stretch occupies residues 99–106; that stretch reads GKSSVGKS. GTP-binding positions include 102-107 and 121-126; these read SVGKSS and QAFKLQ. Serine 106 serves as a coordination point for Mg(2+). The segment at 121 to 124 is homodimerization; sequence QAFK. The segment at 126-130 is G2; sequence QADTD. The interval 155–158 is G3; that stretch reads DTCG. The interval 193–198 is homodimerization; it reads RLDLYR. The segment at 227 to 230 is G4; it reads THAN. GTP is bound by residues histidine 228 and 271–272; that span reads EN. A G5 region spans residues 271–273; sequence ENS. Residues 329 to 349 form a helical membrane-spanning segment; it reads LLPVAIAAEVLFYRRFLHPRL. An AKR2A-binding sequence (ABS) required for chloroplast outer envelope membrane targeting motif is present at residues 350-358; the sequence is DDNQRRVER.

Belongs to the TRAFAC class TrmE-Era-EngA-EngB-Septin-like GTPase superfamily. AIG1/Toc34/Toc159-like paraseptin GTPase family. TOC34 subfamily. Homodimer, heterodimer with other TOC proteins, and monomer. Part of the TOC core complex that includes 1 protein for the specific recognition of transit peptides surrounded by a ring composed of four proteins forming translocation channels, and four to five GTP-binding proteins providing energy. This core complex can interact with components of the TIC complex to form a larger import complex. Interacts with ARSA1. It depends on Mg(2+) as a cofactor.

The protein localises to the plastid. The protein resides in the chloroplast outer membrane. Functionally, GTPase involved in protein precursor import into chloroplasts. Seems to recognize chloroplast-destined precursor proteins and regulate their presentation to the translocation channel through GTP hydrolysis. Functions as an essential component of the outer chloroplast membrane translocon (TOC) complex, which, in turn, catalyzes the import of nucleus-encoded precursor polypeptides from the cytoplasm to the chloroplast. The protein is Translocase of chloroplast 34 homolog, chloroplastic of Chlamydomonas reinhardtii (Chlamydomonas smithii).